A 214-amino-acid polypeptide reads, in one-letter code: MAAPSVPTPLYGHVGRGAFRDVYEPAEDTFLLLDALEAAAAELAGVEICLEVGAGSGVVSAFLASMIGPRALYMCTDINPEAAACTLETARCNRVHVQPVITDLVHGLLPRLKGKVDLLVFNPPYVVTPPEEVGSRGIEAAWAGGRNGREVMDRFFPLAPELLSPRGLFYLVTVKENNPEEIFKTMKTRGLQGTTALCRQAGQEALSVLRFSKS.

7 residues coordinate S-adenosyl-L-methionine: Thr29, Glu51, Gly53, Asp77, Asp103, Leu104, and Asn122. Residue Asn122 coordinates a protein.

Belongs to the eukaryotic/archaeal PrmC-related family. As to quaternary structure, heterodimer; heterodimerization with TRMT112 is required for S-adenosyl-L-methionine-binding. Post-translationally, ubiquitinated, leading to its degradation by the proteasome. Highly expressed in undifferentiated embryonic stem cells (at protein level). Also expressed in testis and brain, weakly expressed in differentiated embryonic stem cells and kidney. Not expressed in muscle, heart, placenta, pancreas, lung and stomach.

It is found in the nucleus. The enzyme catalyses L-lysyl-[histone] + S-adenosyl-L-methionine = N(6)-methyl-L-lysyl-[histone] + S-adenosyl-L-homocysteine + H(+). It carries out the reaction L-glutaminyl-[protein] + S-adenosyl-L-methionine = N(5)-methyl-L-glutaminyl-[protein] + S-adenosyl-L-homocysteine + H(+). It catalyses the reaction methylarsonous acid + S-adenosyl-L-methionine = dimethylarsinate + S-adenosyl-L-homocysteine + 2 H(+). Its function is as follows. Methyltransferase that can methylate proteins and, to a lower extent, arsenic. Catalytic subunit of a heterodimer with TRMT112, which monomethylates 'Lys-12' of histone H4 (H4K12me1), a modification present at the promoters of numerous genes encoding cell cycle regulators. Catalytic subunit of a heterodimer with TRMT112, which catalyzes N5-methylation of Glu residue of proteins with a Gly-Gln-Xaa-Xaa-Xaa-Arg motif. Methylates ETF1 on 'Gln-185'; ETF1 needs to be complexed to ERF3 in its GTP-bound form to be efficiently methylated. May also play a role in the modulation of arsenic-induced toxicity by mediating the conversion of monomethylarsonous acid (3+) into the less toxic dimethylarsonic acid. It however only plays a limited role in arsenic metabolism compared with AS3MT. The chain is Methyltransferase HEMK2 from Mus musculus (Mouse).